The primary structure comprises 302 residues: Ethylmalonyl-CoA decarboxylase (302 aa).

The protein belongs to the enoyl-CoA hydratase/isomerase family.

Its subcellular location is the cytoplasm. The protein localises to the cytosol. It carries out the reaction (2S)-ethylmalonyl-CoA + H(+) = butanoyl-CoA + CO2. The enzyme catalyses (S)-methylmalonyl-CoA + H(+) = propanoyl-CoA + CO2. It catalyses the reaction (2R)-ethylmalonyl-CoA + H(+) = butanoyl-CoA + CO2. In terms of biological role, decarboxylates ethylmalonyl-CoA, a potentially toxic metabolite, to form butyryl-CoA, suggesting it might be involved in metabolite proofreading. Acts preferentially on (S)-ethylmalonyl-CoA but also has some activity on the (R)-isomer. Also has methylmalonyl-CoA decarboxylase activity at lower level. The polypeptide is Ethylmalonyl-CoA decarboxylase (echdc1) (Danio rerio (Zebrafish)).